The following is a 454-amino-acid chain: Tryptophanase (454 aa).

Lysine 256 bears the N6-(pyridoxal phosphate)lysine mark.

It belongs to the beta-eliminating lyase family. In terms of assembly, homotetramer. Pyridoxal 5'-phosphate serves as cofactor.

It carries out the reaction L-tryptophan + H2O = indole + pyruvate + NH4(+). It participates in amino-acid degradation; L-tryptophan degradation via pyruvate pathway; indole and pyruvate from L-tryptophan: step 1/1. This Rhodobacter capsulatus (Rhodopseudomonas capsulata) protein is Tryptophanase (tnaA).